Consider the following 372-residue polypeptide: NAD(P)H-quinone oxidoreductase subunit 1 (372 aa).

8 helical membrane passes run 27-47 (LLWL…GVLV), 97-117 (LLFT…WLII), 128-148 (VGIG…GLLM), 176-196 (LALA…IDIV), 204-224 (FLSW…ICAL), 270-290 (LLVS…ELIA), 308-328 (SLGI…AILL), and 351-371 (ISLV…FAFG).

This sequence belongs to the complex I subunit 1 family. In terms of assembly, NDH-1 is composed of at least 11 different subunits.

The protein localises to the cellular thylakoid membrane. It catalyses the reaction a plastoquinone + NADH + (n+1) H(+)(in) = a plastoquinol + NAD(+) + n H(+)(out). The enzyme catalyses a plastoquinone + NADPH + (n+1) H(+)(in) = a plastoquinol + NADP(+) + n H(+)(out). Functionally, NDH-1 shuttles electrons from an unknown electron donor, via FMN and iron-sulfur (Fe-S) centers, to quinones in the respiratory and/or the photosynthetic chain. The immediate electron acceptor for the enzyme in this species is believed to be plastoquinone. Couples the redox reaction to proton translocation, and thus conserves the redox energy in a proton gradient. The polypeptide is NAD(P)H-quinone oxidoreductase subunit 1 (Prochlorococcus marinus (strain SARG / CCMP1375 / SS120)).